Here is a 593-residue protein sequence, read N- to C-terminus: Efflux pump FUBT (593 aa).

The disordered stretch occupies residues 1 to 44; sequence MAIDPQPSSPSLSSETIANDTIGNDNNVNEPSVEPKTQENQHTV. The segment covering 9-30 has biased composition (polar residues); sequence SPSLSSETIANDTIGNDNNVNE. A glycan (N-linked (GlcNAc...) asparagine) is linked at N19. A run of 12 helical transmembrane segments spans residues 98 to 118, 135 to 155, 167 to 187, 195 to 215, 227 to 247, 254 to 274, 337 to 357, 367 to 387, 410 to 430, 438 to 458, 468 to 488, and 503 to 523; these read WAFVLLQSLACLATTFASSAY, VATLGISLYVLGFTFGPLIWA, FFFTFMVATAFSAGAAGAGSI, FLTGSIGSAPLSNAPALIADM, MFSGAPFLGPAIGPIAGGFLG, WLHGLMAAFTGVTWIACTVFI, IYISIIYGTMYMCFAAFPIVF, IGGLAFTGIVIGVVLSIISFA, LPPAIMGSLLIPIGLFWFAWT, IVPIIGTVFFAWGLVLVFMAL, IFAASIMAANSALRSLFGAAF, and WASSIPAFLALACVPFPFLFY. Positions 570-593 are disordered; the sequence is THNSHASAAHSHGHRRSLSYTRSV.

The protein belongs to the major facilitator superfamily. DHA1 family. Polyamines/proton antiporter (TC 2.A.1.2.16) subfamily.

It is found in the cell membrane. Efflux pump involved in export of fusaric acid, a mycotoxin with low to moderate toxicity to animals and humans, but with high phytotoxic properties. Constitutes a self-protecting mechanism of the fungus against critical levels of FSA within the cell. In Fusarium oxysporum (Fusarium vascular wilt), this protein is Efflux pump FUBT.